The chain runs to 554 residues: Malate synthase 1 (554 aa).

The active-site Proton acceptor is arginine 177. Residue aspartate 457 is the Proton donor of the active site. Positions 552–554 (SKL) match the SKL peroxisome targeting motif motif.

It belongs to the malate synthase family. As to quaternary structure, interacts with PEX9.

The protein localises to the peroxisome matrix. It catalyses the reaction glyoxylate + acetyl-CoA + H2O = (S)-malate + CoA + H(+). It participates in carbohydrate metabolism; glyoxylate cycle; (S)-malate from isocitrate: step 2/2. In terms of biological role, malate synthase which takes part in the glyoxylate cycle. MLS1 activity is essential for cells to grow on oleic acid as a sole carbon source. Two steps of the glyoxylate cycle take place in the cytosol, the splitting of isocitrate into succinate and glyoxylate, and the dehydrogenation of malate to oxaloacetate. However, the formation of malate from glyoxylate and acetyl-CoA undertaken MLS1, occurs in the peroxisomes when cells are grown on oleic acid. The source of acetyl-CoA being either peroxisomal when breaking down fatty acids, or cytosolic when extra-cellular two-carbon substrates are used, therefore, although not strictly essential, the peroxisomal localization of MLS1 appears to be advantageous for cells growing on oleic acid, in that acetyl-CoA production and utilization are thereby intimately compartmentalized together to increase efficiency. This is Malate synthase 1 from Saccharomyces cerevisiae (strain ATCC 204508 / S288c) (Baker's yeast).